The chain runs to 556 residues: Urocanate hydratase (556 aa).

NAD(+) is bound by residues G52–G53, Q130, G176–G178, E196, R201, N242–A243, Q263–H267, Y273–L274, and Y322. C410 is an active-site residue. Residue G492 participates in NAD(+) binding.

The protein belongs to the urocanase family. Requires NAD(+) as cofactor.

The protein localises to the cytoplasm. It catalyses the reaction 4-imidazolone-5-propanoate = trans-urocanate + H2O. It functions in the pathway amino-acid degradation; L-histidine degradation into L-glutamate; N-formimidoyl-L-glutamate from L-histidine: step 2/3. Functionally, catalyzes the conversion of urocanate to 4-imidazolone-5-propionate. The protein is Urocanate hydratase of Shewanella piezotolerans (strain WP3 / JCM 13877).